The following is a 464-amino-acid chain: MMEMRVGIVGGGLAGLTAAIALAEKGFDVSIIGPRSTDSNSYLAQAGIALPLLEGDSIRIHVLDTIKAGKYINDEEIVWNVISKSSEAHDFLTSHGVTFTGNELEGGHSYPRIFTIKSETGKHIIPILEKHARELDVNFIRGFVEEIGINNGKLAGVFLQGELLKFDAVVIAAGGFSGLYRFTAGVKNNIGLLIGDVALKGVPLRDMEFVQFHPTGFIGKRTYLITEAVRGAGAKLVTGDGERFVNELETRDIVARAIYMKMLEGKGVFLDARGIENFKDRFPYIYSVLRGEGINPEKDLIPITPVAHYTIGGISVDAFYRTRIKGLYAIGESACNGFHGANRLASNSLLECVVSGLEVARTISREKPKREVNDAPYSFNELGDVDSIREVLWNHAGIVRDEWSLREGLRKLKEIEVDERLKLVAKAVIISALKREESRGAHYRKDYPFMRKEFEHSSFFYPNV.

Residues 11–14 (GGLA) and 40–47 (NSYLAQAG) each bind FAD. R251 (proton donor/acceptor) is an active-site residue. FAD is bound by residues E332 and 348-349 (SL).

Belongs to the FAD-dependent oxidoreductase 2 family. NadB subfamily. It depends on FAD as a cofactor.

The protein localises to the cytoplasm. It catalyses the reaction L-aspartate + O2 = iminosuccinate + H2O2. The protein operates within cofactor biosynthesis; NAD(+) biosynthesis; iminoaspartate from L-aspartate (oxidase route): step 1/1. Catalyzes the oxidation of L-aspartate to iminoaspartate, the first step in the de novo biosynthesis of NAD(+). This chain is L-aspartate oxidase (nadB), found in Pyrococcus horikoshii (strain ATCC 700860 / DSM 12428 / JCM 9974 / NBRC 100139 / OT-3).